A 209-amino-acid polypeptide reads, in one-letter code: MSGKKRTASSSRWMQEHFDDHYVKLAQKRGFRSRAAFKIEEIQEKDKLIRPGMTVVDLGAAPGGWSQVAVKLAGDKGKVIACDILPMDPIVGVDFLQGDFREEKVLDALLTRVGDAKVDVVLSDMAPNMSGTGGVDQPRAMYLVELALDMCHQVLAPNGCFAVKVFQGEGFDEYMKAVKEAFKTVKTRKPDSSRPRSREVYLVATGYKL.

The S-adenosyl-L-methionine site is built by Gly63, Trp65, Asp83, Asp99, and Asp124. Lys164 serves as the catalytic Proton acceptor.

The protein belongs to the class I-like SAM-binding methyltransferase superfamily. RNA methyltransferase RlmE family.

Its subcellular location is the cytoplasm. The catalysed reaction is uridine(2552) in 23S rRNA + S-adenosyl-L-methionine = 2'-O-methyluridine(2552) in 23S rRNA + S-adenosyl-L-homocysteine + H(+). Functionally, specifically methylates the uridine in position 2552 of 23S rRNA at the 2'-O position of the ribose in the fully assembled 50S ribosomal subunit. In Shewanella piezotolerans (strain WP3 / JCM 13877), this protein is Ribosomal RNA large subunit methyltransferase E.